A 211-amino-acid polypeptide reads, in one-letter code: ATP phosphoribosyltransferase (211 aa).

It belongs to the ATP phosphoribosyltransferase family. Short subfamily. As to quaternary structure, heteromultimer composed of HisG and HisZ subunits.

The protein resides in the cytoplasm. It carries out the reaction 1-(5-phospho-beta-D-ribosyl)-ATP + diphosphate = 5-phospho-alpha-D-ribose 1-diphosphate + ATP. It functions in the pathway amino-acid biosynthesis; L-histidine biosynthesis; L-histidine from 5-phospho-alpha-D-ribose 1-diphosphate: step 1/9. Functionally, catalyzes the condensation of ATP and 5-phosphoribose 1-diphosphate to form N'-(5'-phosphoribosyl)-ATP (PR-ATP). Has a crucial role in the pathway because the rate of histidine biosynthesis seems to be controlled primarily by regulation of HisG enzymatic activity. This Pseudomonas putida (strain GB-1) protein is ATP phosphoribosyltransferase.